The following is a 508-amino-acid chain: Photosystem II CP47 reaction center protein (508 aa).

Helical transmembrane passes span 21 to 36 (SVHI…WAGS), 101 to 115 (IVFS…IWHW), 140 to 156 (GIHL…FGAF), 203 to 218 (IAAG…FHLS), 237 to 252 (VLSS…AFVV), and 457 to 472 (SFAL…HGSR).

This sequence belongs to the PsbB/PsbC family. PsbB subfamily. PSII is composed of 1 copy each of membrane proteins PsbA, PsbB, PsbC, PsbD, PsbE, PsbF, PsbH, PsbI, PsbJ, PsbK, PsbL, PsbM, PsbT, PsbX, PsbY, PsbZ, Psb30/Ycf12, at least 3 peripheral proteins of the oxygen-evolving complex and a large number of cofactors. It forms dimeric complexes. Requires Binds multiple chlorophylls. PSII binds additional chlorophylls, carotenoids and specific lipids. as cofactor.

The protein localises to the plastid. It localises to the chloroplast thylakoid membrane. Its function is as follows. One of the components of the core complex of photosystem II (PSII). It binds chlorophyll and helps catalyze the primary light-induced photochemical processes of PSII. PSII is a light-driven water:plastoquinone oxidoreductase, using light energy to abstract electrons from H(2)O, generating O(2) and a proton gradient subsequently used for ATP formation. The protein is Photosystem II CP47 reaction center protein of Lepidium virginicum (Virginia pepperweed).